Reading from the N-terminus, the 263-residue chain is 3-methyl-2-oxobutanoate hydroxymethyltransferase (263 aa).

Residues D43 and D82 each contribute to the Mg(2+) site. Residues 43–44 (DS), D82, and K111 each bind 3-methyl-2-oxobutanoate. E113 serves as a coordination point for Mg(2+). E179 acts as the Proton acceptor in catalysis.

Belongs to the PanB family. Homodecamer; pentamer of dimers. Requires Mg(2+) as cofactor.

Its subcellular location is the cytoplasm. The enzyme catalyses 3-methyl-2-oxobutanoate + (6R)-5,10-methylene-5,6,7,8-tetrahydrofolate + H2O = 2-dehydropantoate + (6S)-5,6,7,8-tetrahydrofolate. It functions in the pathway cofactor biosynthesis; (R)-pantothenate biosynthesis; (R)-pantoate from 3-methyl-2-oxobutanoate: step 1/2. Catalyzes the reversible reaction in which hydroxymethyl group from 5,10-methylenetetrahydrofolate is transferred onto alpha-ketoisovalerate to form ketopantoate. The polypeptide is 3-methyl-2-oxobutanoate hydroxymethyltransferase (Neisseria meningitidis serogroup B (strain ATCC BAA-335 / MC58)).